The primary structure comprises 1224 residues: WD repeat-containing protein 11 (1224 aa).

WD repeat units lie at residues Lys-59–Glu-108 and Glu-111–Lys-154. 2 positions are modified to phosphoserine: Ser-205 and Ser-209. Residues Lys-354 to Asn-393 form a WD 3 repeat. Residues Ser-402 and Ser-406 each carry the phosphoserine modification. WD repeat units lie at residues Arg-471–Glu-510, Asn-566–Glu-605, Gly-708–Ile-745, Thr-747–Ser-787, Asn-793–Arg-831, and Ser-893–Ser-940.

Component of the complex WDR11 composed of C17orf75, FAM91A1 and WDR11; FAM91A1 and WDR11 are required for proper location of the complex. Interacts (via the N-terminal and the central portion of the protein) with EMX1. Interacts with GLI3; the interaction associateS EMX1 with GLI3. Interacts with TBC1D23; this interaction may be indirect and recruits TBC1D23 to AP-1-derived vesicles. In terms of tissue distribution, ubiquitous.

The protein localises to the cytoplasm. It is found in the cytoskeleton. Its subcellular location is the cilium basal body. It localises to the nucleus. The protein resides in the cilium axoneme. The protein localises to the cytoplasmic vesicle. It is found in the golgi apparatus. Its subcellular location is the trans-Golgi network. Functionally, involved in the Hedgehog (Hh) signaling pathway, is essential for normal ciliogenesis. Regulates the proteolytic processing of GLI3 and cooperates with the transcription factor EMX1 in the induction of downstream Hh pathway gene expression and gonadotropin-releasing hormone production. WDR11 complex facilitates the tethering of Adaptor protein-1 complex (AP-1)-derived vesicles. WDR11 complex acts together with TBC1D23 to facilitate the golgin-mediated capture of vesicles generated using AP-1. This Homo sapiens (Human) protein is WD repeat-containing protein 11 (WDR11).